Reading from the N-terminus, the 116-residue chain is Large ribosomal subunit protein bL19 (116 aa).

It belongs to the bacterial ribosomal protein bL19 family.

Functionally, this protein is located at the 30S-50S ribosomal subunit interface and may play a role in the structure and function of the aminoacyl-tRNA binding site. The polypeptide is Large ribosomal subunit protein bL19 (Staphylococcus epidermidis (strain ATCC 35984 / DSM 28319 / BCRC 17069 / CCUG 31568 / BM 3577 / RP62A)).